A 457-amino-acid chain; its full sequence is Methylenetetrahydrofolate--tRNA-(uracil-5-)-methyltransferase TrmFO (457 aa).

FAD is bound at residue 8-13 (GGGLAG).

The protein belongs to the MnmG family. TrmFO subfamily. Requires FAD as cofactor.

Its subcellular location is the cytoplasm. The enzyme catalyses uridine(54) in tRNA + (6R)-5,10-methylene-5,6,7,8-tetrahydrofolate + NADH + H(+) = 5-methyluridine(54) in tRNA + (6S)-5,6,7,8-tetrahydrofolate + NAD(+). The catalysed reaction is uridine(54) in tRNA + (6R)-5,10-methylene-5,6,7,8-tetrahydrofolate + NADPH + H(+) = 5-methyluridine(54) in tRNA + (6S)-5,6,7,8-tetrahydrofolate + NADP(+). Functionally, catalyzes the folate-dependent formation of 5-methyl-uridine at position 54 (M-5-U54) in all tRNAs. The chain is Methylenetetrahydrofolate--tRNA-(uracil-5-)-methyltransferase TrmFO from Thermosynechococcus vestitus (strain NIES-2133 / IAM M-273 / BP-1).